The primary structure comprises 267 residues: 3-methyl-2-oxobutanoate hydroxymethyltransferase (267 aa).

Mg(2+)-binding residues include Asp-45 and Asp-84. 3-methyl-2-oxobutanoate-binding positions include 45-46 (DS), Asp-84, and Lys-113. Position 115 (Glu-115) interacts with Mg(2+). Glu-182 serves as the catalytic Proton acceptor.

Belongs to the PanB family. In terms of assembly, homodecamer; pentamer of dimers. Mg(2+) is required as a cofactor.

Its subcellular location is the cytoplasm. It carries out the reaction 3-methyl-2-oxobutanoate + (6R)-5,10-methylene-5,6,7,8-tetrahydrofolate + H2O = 2-dehydropantoate + (6S)-5,6,7,8-tetrahydrofolate. It functions in the pathway cofactor biosynthesis; coenzyme A biosynthesis. Its function is as follows. Catalyzes the reversible reaction in which hydroxymethyl group from 5,10-methylenetetrahydrofolate is transferred onto alpha-ketoisovalerate to form ketopantoate. The protein is 3-methyl-2-oxobutanoate hydroxymethyltransferase of Saccharolobus islandicus (strain Y.G.57.14 / Yellowstone #1) (Sulfolobus islandicus).